We begin with the raw amino-acid sequence, 129 residues long: Small ribosomal subunit protein uS11 (129 aa).

It belongs to the universal ribosomal protein uS11 family. Part of the 30S ribosomal subunit. Interacts with proteins S7 and S18. Binds to IF-3.

In terms of biological role, located on the platform of the 30S subunit, it bridges several disparate RNA helices of the 16S rRNA. Forms part of the Shine-Dalgarno cleft in the 70S ribosome. The protein is Small ribosomal subunit protein uS11 of Macrococcus caseolyticus (strain JCSC5402) (Macrococcoides caseolyticum).